Consider the following 490-residue polypeptide: Katanin p60 ATPase-containing subunit A-like 1 (490 aa).

M1 carries the N-acetylmethionine modification. The interval 95–178 (DPAVWPPPVP…MQDGASDGDI (84 aa)) is disordered. Basic and acidic residues predominate over residues 116-127 (PNREVRPLRKDV). The segment covering 128 to 139 (AGVGARGPVGRA) has biased composition (low complexity). Residues 143–169 (SKSEKPSTNKDKDYRARGRDDKGRKNM) show a composition bias toward basic and acidic residues. The residue at position 174 (S174) is a Phosphoserine. An ATP-binding site is contributed by 248–255 (GPPGTGKT).

Belongs to the AAA ATPase family. Katanin p60 subunit A1 subfamily. A-like 1 sub-subfamily. Interacts with KATNB1 and KATNBL1.

It localises to the cytoplasm. The protein resides in the cytoskeleton. Its subcellular location is the spindle pole. The protein localises to the spindle. It catalyses the reaction n ATP + n H2O + a microtubule = n ADP + n phosphate + (n+1) alpha/beta tubulin heterodimers.. In terms of biological role, regulates microtubule dynamics in Sertoli cells, a process that is essential for spermiogenesis and male fertility. Severs microtubules in an ATP-dependent manner, promoting rapid reorganization of cellular microtubule arrays. Has microtubule-severing activity in vitro. This chain is Katanin p60 ATPase-containing subunit A-like 1, found in Sorex araneus (Eurasian common shrew).